The sequence spans 624 residues: DNA-directed RNA polymerase subunit gamma (624 aa).

Zn(2+)-binding residues include C70, C72, C85, and C88. 3 residues coordinate Mg(2+): D466, D468, and D470.

This sequence belongs to the RNA polymerase beta' chain family. RpoC1 subfamily. In cyanobacteria the RNAP catalytic core is composed of 2 alpha, 1 beta, 1 beta', 1 gamma and 1 omega subunit. When a sigma factor is associated with the core the holoenzyme is formed, which can initiate transcription. Mg(2+) is required as a cofactor. It depends on Zn(2+) as a cofactor.

It catalyses the reaction RNA(n) + a ribonucleoside 5'-triphosphate = RNA(n+1) + diphosphate. In terms of biological role, DNA-dependent RNA polymerase catalyzes the transcription of DNA into RNA using the four ribonucleoside triphosphates as substrates. The chain is DNA-directed RNA polymerase subunit gamma from Synechococcus elongatus (strain ATCC 33912 / PCC 7942 / FACHB-805) (Anacystis nidulans R2).